Consider the following 391-residue polypeptide: Casein kinase II subunit alpha (391 aa).

Residues 36 to 41 (QDDYQL) are interaction with beta subunit. In terms of domain architecture, Protein kinase spans 39–324 (YQLVRKLGRG…AREAMEHPYF (286 aa)). ATP contacts are provided by residues 45 to 53 (LGRGKYSEV) and Lys68. Catalysis depends on Asp156, which acts as the Proton acceptor. Residues Thr344 and Thr360 each carry the phosphothreonine; by CDK1 modification. 2 positions are modified to phosphoserine; by CDK1: Ser362 and Ser370.

This sequence belongs to the protein kinase superfamily. Ser/Thr protein kinase family. CK2 subfamily. As to quaternary structure, heterotetramer composed of two catalytic subunits (alpha chain and/or alpha' chain) and two regulatory subunits (beta chains). The tetramer can exist as a combination of 2 alpha/2 beta, 2 alpha'/2 beta or 1 alpha/1 alpha'/2 beta subunits. Also part of a CK2-SPT16-SSRP1 complex composed of SSRP1, SUPT16H, CSNK2A1, CSNK2A2 and CSNK2B, which forms following UV irradiation. Interacts with RNPS1. Interacts with SNAI1. Interacts with PML. Interacts with CCAR2. Interacts with HIRIP3. Phosphorylated at Thr-344, Thr-360, Ser-362 and Ser-370 by CDK1 in prophase and metaphase and dephosphorylated during anaphase. Phosphorylation does not directly affect casein kinase 2 activity, but may contribute to its regulation by forming binding sites for interacting proteins and/or targeting it to different compartments.

It localises to the nucleus. It carries out the reaction L-seryl-[protein] + ATP = O-phospho-L-seryl-[protein] + ADP + H(+). The enzyme catalyses L-threonyl-[protein] + ATP = O-phospho-L-threonyl-[protein] + ADP + H(+). Its activity is regulated as follows. Constitutively active protein kinase whose activity is not directly affected by phosphorylation. Seems to be regulated by level of expression and localization. Catalytic subunit of a constitutively active serine/threonine-protein kinase complex that phosphorylates a large number of substrates containing acidic residues C-terminal to the phosphorylated serine or threonine. Regulates numerous cellular processes, such as cell cycle progression, apoptosis and transcription, as well as viral infection. May act as a regulatory node which integrates and coordinates numerous signals leading to an appropriate cellular response. During mitosis, functions as a component of the p53/TP53-dependent spindle assembly checkpoint (SAC) that maintains cyclin-B-CDK1 activity and G2 arrest in response to spindle damage. Also required for p53/TP53-mediated apoptosis, phosphorylating 'Ser-392' of p53/TP53 following UV irradiation. Phosphorylates a number of DNA repair proteins in response to DNA damage, such as MDC1, MRE11, RAD9A, RAD51 and HTATSF1, promoting their recruitment to DNA damage sites. Can also negatively regulate apoptosis. Phosphorylates the caspases CASP9 and CASP2 and the apoptotic regulator NOL3. Phosphorylation protects CASP9 from cleavage and activation by CASP8, and inhibits the dimerization of CASP2 and activation of CASP8. Phosphorylates YY1, protecting YY1 from cleavage by CASP7 during apoptosis. Regulates transcription by direct phosphorylation of RNA polymerases I, II, III and IV. Also phosphorylates and regulates numerous transcription factors including NF-kappa-B, STAT1, CREB1, IRF1, IRF2, ATF1, ATF4, SRF, MAX, JUN, FOS, MYC and MYB. Phosphorylates Hsp90 and its co-chaperones FKBP4 and CDC37, which is essential for chaperone function. Mediates sequential phosphorylation of FNIP1, promoting its gradual interaction with Hsp90, leading to activate both kinase and non-kinase client proteins of Hsp90. Regulates Wnt signaling by phosphorylating CTNNB1 and the transcription factor LEF1. Acts as an ectokinase that phosphorylates several extracellular proteins. Phosphorylates PML at 'Ser-565' and primes it for ubiquitin-mediated degradation. Plays an important role in the circadian clock function by phosphorylating BMAL1 at 'Ser-90' which is pivotal for its interaction with CLOCK and which controls CLOCK nuclear entry. Phosphorylates FMR1, promoting FMR1-dependent formation of a membraneless compartment. May phosphorylate histone H2A on 'Ser-1'. The polypeptide is Casein kinase II subunit alpha (CSNK2A1) (Oryctolagus cuniculus (Rabbit)).